Reading from the N-terminus, the 369-residue chain is Ribosomal RNA large subunit methyltransferase G (369 aa).

This sequence belongs to the methyltransferase superfamily. RlmG family.

The protein localises to the cytoplasm. It catalyses the reaction guanosine(1835) in 23S rRNA + S-adenosyl-L-methionine = N(2)-methylguanosine(1835) in 23S rRNA + S-adenosyl-L-homocysteine + H(+). In terms of biological role, specifically methylates the guanine in position 1835 (m2G1835) of 23S rRNA. This is Ribosomal RNA large subunit methyltransferase G from Magnetococcus marinus (strain ATCC BAA-1437 / JCM 17883 / MC-1).